A 307-amino-acid chain; its full sequence is N-acetylmuramic acid 6-phosphate etherase (307 aa).

In terms of domain architecture, SIS spans Thr-59–Lys-222. The Proton donor role is filled by Glu-87. The active site involves Glu-118.

It belongs to the GCKR-like family. MurNAc-6-P etherase subfamily. As to quaternary structure, homodimer.

The enzyme catalyses N-acetyl-D-muramate 6-phosphate + H2O = N-acetyl-D-glucosamine 6-phosphate + (R)-lactate. It functions in the pathway amino-sugar metabolism; N-acetylmuramate degradation. Specifically catalyzes the cleavage of the D-lactyl ether substituent of MurNAc 6-phosphate, producing GlcNAc 6-phosphate and D-lactate. In Nostoc sp. (strain PCC 7120 / SAG 25.82 / UTEX 2576), this protein is N-acetylmuramic acid 6-phosphate etherase.